Reading from the N-terminus, the 315-residue chain is Prephenate dehydratase (315 aa).

A Prephenate dehydratase domain is found at 7–190 (VVAYLGPAGT…ARTRFVAVQA (184 aa)). One can recognise an ACT domain in the interval 204-283 (SVIFSLPNVP…LVFVGSWPSN (80 aa)).

The catalysed reaction is prephenate + H(+) = 3-phenylpyruvate + CO2 + H2O. Its pathway is amino-acid biosynthesis; L-phenylalanine biosynthesis; phenylpyruvate from prephenate: step 1/1. The polypeptide is Prephenate dehydratase (pheA) (Corynebacterium glutamicum (strain ATCC 13032 / DSM 20300 / JCM 1318 / BCRC 11384 / CCUG 27702 / LMG 3730 / NBRC 12168 / NCIMB 10025 / NRRL B-2784 / 534)).